We begin with the raw amino-acid sequence, 461 residues long: Photosystem II CP43 reaction center protein (461 aa).

A propeptide spanning residues 1-2 is cleaved from the precursor; that stretch reads ME. Threonine 3 carries the N-acetylthreonine modification. Phosphothreonine is present on threonine 3. Helical transmembrane passes span 57 to 81, 122 to 143, 166 to 188, 243 to 263, and 279 to 300; these read LFEV…PHLA, LLGP…KDRN, KALY…RKIT, KPFA…LSYS, and WFNN…ASQA. Residue glutamate 355 coordinates [CaMn4O5] cluster. A helical membrane pass occupies residues 435-459; that stretch reads RARAAAAGFEKGIDRDLEPVLFMTP.

It belongs to the PsbB/PsbC family. PsbC subfamily. In terms of assembly, PSII is composed of 1 copy each of membrane proteins PsbA, PsbB, PsbC, PsbD, PsbE, PsbF, PsbH, PsbI, PsbJ, PsbK, PsbL, PsbM, PsbT, PsbX, PsbY, PsbZ, Psb30/Ycf12, at least 3 peripheral proteins of the oxygen-evolving complex and a large number of cofactors. It forms dimeric complexes. Binds multiple chlorophylls and provides some of the ligands for the Ca-4Mn-5O cluster of the oxygen-evolving complex. It may also provide a ligand for a Cl- that is required for oxygen evolution. PSII binds additional chlorophylls, carotenoids and specific lipids. serves as cofactor.

It is found in the plastid. Its subcellular location is the chloroplast thylakoid membrane. One of the components of the core complex of photosystem II (PSII). It binds chlorophyll and helps catalyze the primary light-induced photochemical processes of PSII. PSII is a light-driven water:plastoquinone oxidoreductase, using light energy to abstract electrons from H(2)O, generating O(2) and a proton gradient subsequently used for ATP formation. The protein is Photosystem II CP43 reaction center protein of Nandina domestica (Heavenly bamboo).